A 756-amino-acid polypeptide reads, in one-letter code: MTTSHILGFPRVGAKRELKFAQERYWRKELAEQDLLDLAKALREKNWKHQAAANADFVAVGDFTFYDHILDLQVATGAIPARFGFDSQNLTLDQYFQLARGNKDQFAIEMTKWFDTNYHYLVPEFQKSTAFKANPAHYVNQIREAKALGLNFKPVIVGPLTFLWLGKEKGEAFNRFDLLNQLVPVYVEILNALVAEGAEWIQIDEPALALDLPAEWVEAYKSVYTELSKVNAKLLLATYFGSVAEHAELLKALPVAGLHLDLVRAPEQLAAFEDYSKVLSAGVIEGRNIWRANLNKVLDVLEPLKAKLGERLWIAPSCSLLHTPFDLEVEVQLKEKNTALYSWLSFTLQKVEELNVLKQALNNGRASVQAALDASQVAADARATSKEIHRPEVAERLANLPKGADQRKSPFAERIVKQNAWLNLPLLPTTNIGSFPQTTEIRHARASFKKGELSLADYEAAMKKEIEYVVRRQEELDLDVLVHGEAERNDMVEYFGELLDGFAFTKFGWVQSYGSRCVKPPVIYGDVTRPEPMTVRWSQYAQSLTNRVMKGMLTGPVTILQWSFVRNDIPRSTVCKQIGVALSDEVLDLEAAGIKVIQIDEPAIREGLPLKRADWDAYLQWAGEAFRLSSMGVQDDTQIHTHMCYSEFNDILPAIAALDADVITIETSRSDMELLTAFADFKYPNDIGPGVYDIHSPRVPTATEVEHLLRKALNVIPKERLWVNPDCGLKTRGWTETIDQLKVMVDVTKKLRAELA.

5-methyltetrahydropteroyltri-L-glutamate contacts are provided by residues 16-19 (RELK) and Lys112. Residues 432–434 (IGS) and Glu485 each bind L-homocysteine. L-methionine is bound by residues 432-434 (IGS) and Glu485. 5-methyltetrahydropteroyltri-L-glutamate is bound by residues 516 to 517 (RC) and Trp562. An L-homocysteine-binding site is contributed by Asp600. An L-methionine-binding site is contributed by Asp600. A 5-methyltetrahydropteroyltri-L-glutamate-binding site is contributed by Glu606. Zn(2+) is bound by residues His642, Cys644, and Glu666. The active-site Proton donor is the His695. Cys727 provides a ligand contact to Zn(2+).

The protein belongs to the vitamin-B12 independent methionine synthase family. It depends on Zn(2+) as a cofactor.

It carries out the reaction 5-methyltetrahydropteroyltri-L-glutamate + L-homocysteine = tetrahydropteroyltri-L-glutamate + L-methionine. Its pathway is amino-acid biosynthesis; L-methionine biosynthesis via de novo pathway; L-methionine from L-homocysteine (MetE route): step 1/1. Its function is as follows. Catalyzes the transfer of a methyl group from 5-methyltetrahydrofolate to homocysteine resulting in methionine formation. The polypeptide is 5-methyltetrahydropteroyltriglutamate--homocysteine methyltransferase (Haemophilus influenzae (strain ATCC 51907 / DSM 11121 / KW20 / Rd)).